The following is a 307-amino-acid chain: Recombination-associated protein RdgC (307 aa).

The protein belongs to the RdgC family.

The protein resides in the cytoplasm. It localises to the nucleoid. In terms of biological role, may be involved in recombination. This is Recombination-associated protein RdgC from Burkholderia cenocepacia (strain ATCC BAA-245 / DSM 16553 / LMG 16656 / NCTC 13227 / J2315 / CF5610) (Burkholderia cepacia (strain J2315)).